Consider the following 466-residue polypeptide: Methylenetetrahydrofolate--tRNA-(uracil-5-)-methyltransferase TrmFO (466 aa).

12 to 17 (GAGLAG) is a binding site for FAD.

It belongs to the MnmG family. TrmFO subfamily. The cofactor is FAD.

The protein localises to the cytoplasm. It carries out the reaction uridine(54) in tRNA + (6R)-5,10-methylene-5,6,7,8-tetrahydrofolate + NADH + H(+) = 5-methyluridine(54) in tRNA + (6S)-5,6,7,8-tetrahydrofolate + NAD(+). It catalyses the reaction uridine(54) in tRNA + (6R)-5,10-methylene-5,6,7,8-tetrahydrofolate + NADPH + H(+) = 5-methyluridine(54) in tRNA + (6S)-5,6,7,8-tetrahydrofolate + NADP(+). Catalyzes the folate-dependent formation of 5-methyl-uridine at position 54 (M-5-U54) in all tRNAs. The chain is Methylenetetrahydrofolate--tRNA-(uracil-5-)-methyltransferase TrmFO from Synechococcus elongatus (strain ATCC 33912 / PCC 7942 / FACHB-805) (Anacystis nidulans R2).